Consider the following 321-residue polypeptide: PI-PLC X domain-containing protein 3 (321 aa).

Residues 22-197 (SIHSIPLTNL…DYQVLVFYHS (176 aa)) enclose the PI-PLC X-box domain. Residues histidine 37 and histidine 114 contribute to the active site.

As to expression, widely expressed, with highest levels in brain, followed by heart atrium. Not detected in small intestine, nor stomach.

The protein localises to the cytoplasm. The polypeptide is PI-PLC X domain-containing protein 3 (Plcxd3) (Mus musculus (Mouse)).